The primary structure comprises 561 residues: Sesquiterpene synthase 1 (561 aa).

Residues aspartate 313, aspartate 317, aspartate 458, and glutamate 466 each contribute to the Mg(2+) site. The DDXXD motif signature appears at 313–317 (DDIYD).

Belongs to the terpene synthase family. Tpsa subfamily. It depends on Mn(2+) as a cofactor. Mg(2+) serves as cofactor.

The protein localises to the cytoplasm. The catalysed reaction is (2E,6E)-farnesyl diphosphate = (1S,8aR)-delta-cadinene + diphosphate. It participates in secondary metabolite biosynthesis; terpenoid biosynthesis. In terms of biological role, involved in the biosynthesis of delta-cadinene. This is Sesquiterpene synthase 1 (STS1) from Thapsia garganica (Deadly carrot).